Here is a 1123-residue protein sequence, read N- to C-terminus: MSLLSIDDIFIPTSDLLNHSHNNKRLNYNQAKQTLLLNMNGSYPSSNNPISNGEPCDAKSNHLGGEMHNGVGSKLENGILKKAPDIPHITNNIIPLSNVLKFYTQEAYKQLTTAIENLSSTKDTENDSSRKKFFLNLIISLRQDFIKIYTLVKWASSSKDISKLIDLLNWFRSQDFYFEQLGYGLNELNRYSGAKLPNSDIITSLEVFIKKRPQLPSYNLISTPPISSEKTLEVLKDLNLTLMTRMALINNLPKRFINNYEIRDGRVYFTIQNEFQVSVTVGNDLIIEQEDDYYKSPFYFIDFKFLFGINPETALITHKDNKIITKLPKSSFQNLEKIVNTVLLNSGLGGLYDLLHKYSISFKLYLIARQLKDISINSKWRNNIQFKYQNGKSLILINYWSSHYLSRNWKSFIELGIDKNYNLNFRWFKNGTYELNHGISGIFDRNNIKKQSDASDEQQNNIEPNEESLEDLREDNNEDESEPQDLSVDLILNIIVNKHSEMLMDKIYETIVKRLSDQEEYCSFISCHQLLLKLTPNKSVVFAINPLTGFFYFIDPSPIQNQVTKKINTQSSNHKNKPFFSENDMVENIVNQLIQLKLEMFNKEINNKLITSGWINNEIIKLNDYETIKLSNFLNGDNFNNSNYNKIQFYRCKNWPLSWFLSNLVSGDNFRTFWWVARIKSIKGEWKIQWVQQLKFDQEMETSDELTLDYKFFNNLSSLCSNMIIDHMILEELQTKKIQYIQKQSKEKAAELLNKFQIDEVKEENIKPEETNNPFVYESIIMLYNDNRLLPVSNSSTSLFLKIKLITLNNSTQMKLKLFGNLRNIPNTLAETFNQLNLHISKSQNYFEINDIVNLSNKINDSSIKETRLLDSILLKLNVLNELIKVLYQLDQNNIEIVNSSIDSIQIKIDEESNNLTIKLPEMDEKFSLLSSNTESNEMKLIISYLNKYLSMTSKVQENEIIGIIKYFKEITPIVKTIKSVRATLDEKNKMKLSNGLSKLNFDVEFQNLNLIQFVYFLNHTNVNSNKKILKDKIVIKLNFMRNRFNKQDRLLLKLSMKDNLNSRNLKYKKLFELIYKGISEVDTTNGSKITKLNYDFIVDSSLINELMIKITDAFILFLSDNA.

A disordered region spans residues Lys450–Gln484.

The protein belongs to the Mediator complex subunit 14 family. Component of the Mediator complex.

It is found in the nucleus. Its function is as follows. Component of the Mediator complex, a coactivator involved in the regulated transcription of nearly all RNA polymerase II-dependent genes. Mediator functions as a bridge to convey information from gene-specific regulatory proteins to the basal RNA polymerase II transcription machinery. Mediator is recruited to promoters by direct interactions with regulatory proteins and serves as a scaffold for the assembly of a functional preinitiation complex with RNA polymerase II and the general transcription factors. In Debaryomyces hansenii (strain ATCC 36239 / CBS 767 / BCRC 21394 / JCM 1990 / NBRC 0083 / IGC 2968) (Yeast), this protein is Mediator of RNA polymerase II transcription subunit 14 (RGR1).